The chain runs to 736 residues: Catalase-peroxidase 2 (736 aa).

The tryptophyl-tyrosyl-methioninium (Trp-Tyr) (with M-253) cross-link spans 91–227 (WHSAGTYRMG…LAAVQMGLIY (137 aa)). H92 functions as the Proton acceptor in the catalytic mechanism. Residues 227–253 (YVNPEGPDGNPDPVAAAYDIREVFGRM) constitute a cross-link (tryptophyl-tyrosyl-methioninium (Tyr-Met) (with W-91)). H268 is a binding site for heme b.

The protein belongs to the peroxidase family. Peroxidase/catalase subfamily. As to quaternary structure, homodimer or homotetramer. It depends on heme b as a cofactor. Post-translationally, formation of the three residue Trp-Tyr-Met cross-link is important for the catalase, but not the peroxidase activity of the enzyme.

It catalyses the reaction H2O2 + AH2 = A + 2 H2O. The enzyme catalyses 2 H2O2 = O2 + 2 H2O. Its function is as follows. Bifunctional enzyme with both catalase and broad-spectrum peroxidase activity. Shows peroxidase specificity towards odianisidine, ABTS and pyrogallol, but methoxyphenol and 2-chloronaphthol are not peroxidized. The protein is Catalase-peroxidase 2 of Burkholderia cenocepacia (strain ATCC BAA-245 / DSM 16553 / LMG 16656 / NCTC 13227 / J2315 / CF5610) (Burkholderia cepacia (strain J2315)).